The chain runs to 362 residues: Melatonin receptor type 1B (362 aa).

At 1–42 (MSENGSFANCCEAGGWAVRPGWSGAGSARPSRTPRPPWVAPA) the chain is on the extracellular side. N4 carries N-linked (GlcNAc...) asparagine glycosylation. A helical transmembrane segment spans residues 43-63 (LSAVLIVTTAVDVVGNLLVIL). Residues 64-76 (SVLRNRKLRNAGN) are Cytoplasmic-facing. A helical transmembrane segment spans residues 77–97 (LFLVSLALADLVVAFYPYPLI). Residues 98–115 (LVAIFYDGWALGEEHCKA) lie on the Extracellular side of the membrane. C113 and C190 are joined by a disulfide. A helical transmembrane segment spans residues 116–136 (SAFVMGLSVIGSVFNITAIAI). Residues 137-155 (NRYCYICHSMAYHRIYRRW) lie on the Cytoplasmic side of the membrane. The helical transmembrane segment at 156–176 (HTPLHICLIWLLTVVALLPNF) threads the bilayer. Melatonin is bound by residues N175 and Q194. At 177–200 (FVGSLEYDPRIYSCTFIQTASTQY) the chain is on the extracellular side. The chain crosses the membrane as a helical span at residues 201-221 (TAAVVVIHFLLPIAVVSFCYL). Topologically, residues 222 to 253 (RIWVLVLQARRKAKPESRLCLKPSDLRSFLTM) are cytoplasmic. The chain crosses the membrane as a helical span at residues 254–274 (FVVFVIFAICWAPLNCIGLAV). Residues 275–287 (AINPQEMAPQIPE) lie on the Extracellular side of the membrane. The chain crosses the membrane as a helical span at residues 288–308 (GLFVTSYLLAYFNSCLNAIVY). Residues 309-362 (GLLNQNFRREYKRILLALWNPRHCIQDASKGSHAEGLQSPAPPIIGVQHQADAL) lie on the Cytoplasmic side of the membrane.

The protein belongs to the G-protein coupled receptor 1 family. Interacts with GPR61, GPR62 and GPR135. Expressed in retina and less in brain and hippocampus.

It is found in the cell membrane. High affinity receptor for melatonin. Likely to mediate the reproductive and circadian actions of melatonin. The activity of this receptor is mediated by pertussis toxin sensitive G proteins that inhibit adenylate cyclase activity. The sequence is that of Melatonin receptor type 1B (MTNR1B) from Homo sapiens (Human).